The following is a 265-amino-acid chain: Undecaprenyl-diphosphatase (265 aa).

8 helical membrane passes run 1-21, 39-59, 86-106, 112-132, 140-160, 186-206, 219-239, and 244-264; these read MDILHAVFLALIQGITEFLPI, QGLAFDVAVHVGTLSAVILYF, WCIIVATVPAGLFGLLLGNFI, SVSVIATTTVVFGLLLWFADA, LAQMTLFIALVIGLAQALAMI, FSFLLSIPIITLSGGYMGLKL, VGVLVSAISAYICIHYFLSFI, and MLPFVIYRLLLGAGLFALVWF.

This sequence belongs to the UppP family.

It localises to the cell inner membrane. The catalysed reaction is di-trans,octa-cis-undecaprenyl diphosphate + H2O = di-trans,octa-cis-undecaprenyl phosphate + phosphate + H(+). In terms of biological role, catalyzes the dephosphorylation of undecaprenyl diphosphate (UPP). Confers resistance to bacitracin. The sequence is that of Undecaprenyl-diphosphatase from Saccharophagus degradans (strain 2-40 / ATCC 43961 / DSM 17024).